Reading from the N-terminus, the 121-residue chain is Large ribosomal subunit protein bL19 (121 aa).

It belongs to the bacterial ribosomal protein bL19 family.

Its function is as follows. This protein is located at the 30S-50S ribosomal subunit interface and may play a role in the structure and function of the aminoacyl-tRNA binding site. In Chloroherpeton thalassium (strain ATCC 35110 / GB-78), this protein is Large ribosomal subunit protein bL19.